The primary structure comprises 297 residues: Formamidopyrimidine-DNA glycosylase (297 aa).

Catalysis depends on Pro2, which acts as the Schiff-base intermediate with DNA. The active-site Proton donor is the Glu3. Lys61 (proton donor; for beta-elimination activity) is an active-site residue. Arg120 and Arg176 together coordinate DNA. The FPG-type zinc finger occupies 262–296 (HVYGRQGQPCDRCGTAIVRESFMNRGSHFCPRCQR). Arg286 (proton donor; for delta-elimination activity) is an active-site residue.

The protein belongs to the FPG family. Monomer. It depends on Zn(2+) as a cofactor.

It carries out the reaction Hydrolysis of DNA containing ring-opened 7-methylguanine residues, releasing 2,6-diamino-4-hydroxy-5-(N-methyl)formamidopyrimidine.. It catalyses the reaction 2'-deoxyribonucleotide-(2'-deoxyribose 5'-phosphate)-2'-deoxyribonucleotide-DNA = a 3'-end 2'-deoxyribonucleotide-(2,3-dehydro-2,3-deoxyribose 5'-phosphate)-DNA + a 5'-end 5'-phospho-2'-deoxyribonucleoside-DNA + H(+). In terms of biological role, involved in base excision repair of DNA damaged by oxidation or by mutagenic agents. Acts as a DNA glycosylase that recognizes and removes damaged bases. Has a preference for oxidized purines, such as 7,8-dihydro-8-oxoguanine (8-oxoG). Has AP (apurinic/apyrimidinic) lyase activity and introduces nicks in the DNA strand. Cleaves the DNA backbone by beta-delta elimination to generate a single-strand break at the site of the removed base with both 3'- and 5'-phosphates. The polypeptide is Formamidopyrimidine-DNA glycosylase (Leifsonia xyli subsp. xyli (strain CTCB07)).